The primary structure comprises 513 residues: Pantetheinase (513 aa).

A signal peptide spans 1–22; the sequence is MITSPLLAYVAILFFCVLKASS. The CN hydrolase domain maps to 40 to 307; the sequence is APLTPVSHEE…GKLLLSQLDS (268 aa). Glutamate 80 acts as the Proton acceptor in catalysis. An N-linked (GlcNAc...) asparagine glycan is attached at asparagine 147. The active-site Proton donor is lysine 179. The Nucleophile role is filled by cysteine 212. Residues asparagine 315 and asparagine 353 are each glycosylated (N-linked (GlcNAc...) asparagine). Glycine 487 is lipidated: GPI-anchor amidated glycine. A propeptide spans 488 to 513 (removed in mature form); the sequence is ASADLVAQGLRVMLGVIITIMYSLSW.

It belongs to the carbon-nitrogen hydrolase superfamily. BTD/VNN family. In terms of assembly, monomer. In terms of tissue distribution, detected in kidney (at protein level).

Its subcellular location is the cell membrane. The enzyme catalyses (R)-pantetheine + H2O = cysteamine + (R)-pantothenate. In terms of biological role, amidohydrolase that hydrolyzes specifically one of the carboamide linkages in D-pantetheine thus recycling pantothenic acid (vitamin B5) and releasing cysteamine. The sequence is that of Pantetheinase (VNN1) from Sus scrofa (Pig).